Here is a 183-residue protein sequence, read N- to C-terminus: ATP-dependent protease subunit HslV (183 aa).

T2 is a catalytic residue. Na(+) contacts are provided by G157, C160, and T163.

The protein belongs to the peptidase T1B family. HslV subfamily. In terms of assembly, a double ring-shaped homohexamer of HslV is capped on each side by a ring-shaped HslU homohexamer. The assembly of the HslU/HslV complex is dependent on binding of ATP.

It is found in the cytoplasm. The catalysed reaction is ATP-dependent cleavage of peptide bonds with broad specificity.. Its activity is regulated as follows. Allosterically activated by HslU binding. Protease subunit of a proteasome-like degradation complex believed to be a general protein degrading machinery. This is ATP-dependent protease subunit HslV from Vibrio parahaemolyticus serotype O3:K6 (strain RIMD 2210633).